We begin with the raw amino-acid sequence, 481 residues long: Ribulose bisphosphate carboxylase large chain (481 aa).

The propeptide occupies 1–2; it reads MS. Pro3 carries the post-translational modification N-acetylproline. Position 14 is an N6,N6,N6-trimethyllysine (Lys14). Substrate is bound by residues Asn123 and Thr173. Residue Lys175 is the Proton acceptor of the active site. Lys177 contributes to the substrate binding site. Positions 201, 203, and 204 each coordinate Mg(2+). Lys201 is modified (N6-carboxylysine). His294 functions as the Proton acceptor in the catalytic mechanism. Residues Arg295, His327, and Ser379 each contribute to the substrate site.

It belongs to the RuBisCO large chain family. Type I subfamily. In terms of assembly, heterohexadecamer of 8 large chains and 8 small chains; disulfide-linked. The disulfide link is formed within the large subunit homodimers. Mg(2+) is required as a cofactor. In terms of processing, the disulfide bond which can form in the large chain dimeric partners within the hexadecamer appears to be associated with oxidative stress and protein turnover.

Its subcellular location is the plastid. The enzyme catalyses 2 (2R)-3-phosphoglycerate + 2 H(+) = D-ribulose 1,5-bisphosphate + CO2 + H2O. The catalysed reaction is D-ribulose 1,5-bisphosphate + O2 = 2-phosphoglycolate + (2R)-3-phosphoglycerate + 2 H(+). In terms of biological role, ruBisCO catalyzes two reactions: the carboxylation of D-ribulose 1,5-bisphosphate, the primary event in carbon dioxide fixation, as well as the oxidative fragmentation of the pentose substrate in the photorespiration process. Both reactions occur simultaneously and in competition at the same active site. The sequence is that of Ribulose bisphosphate carboxylase large chain from Cuscuta sandwichiana (Kauna'oa).